The primary structure comprises 88 residues: Large ribosomal subunit protein bL27 (88 aa).

The span at 1-13 shows a compositional bias: polar residues; it reads MATKKGASSSSNG. The segment at 1–23 is disordered; the sequence is MATKKGASSSSNGRDSEAKRLGV.

The protein belongs to the bacterial ribosomal protein bL27 family.

The protein is Large ribosomal subunit protein bL27 of Corynebacterium urealyticum (strain ATCC 43042 / DSM 7109).